The primary structure comprises 412 residues: 3,4-dihydroxybenzoate--[aryl-carrier protein] ligase (412 aa).

This sequence belongs to the ATP-dependent AMP-binding enzyme family.

The catalysed reaction is holo-[aryl-carrier protein] + 3,4-dihydroxybenzoate + ATP = 3,4-dihydroxybenzoyl-[aryl-carrier protein] + AMP + diphosphate. It carries out the reaction 3,4-dihydroxybenzoate + ATP + H(+) = 3,4-dihydroxybenzoyl-5'-AMP + diphosphate. The enzyme catalyses 3,4-dihydroxybenzoyl-5'-AMP + holo-[aryl-carrier protein] = 3,4-dihydroxybenzoyl-[aryl-carrier protein] + AMP + H(+). The protein operates within siderophore biosynthesis; petrobactin biosynthesis. ATP-pyrophosphate exchange is inhibited in vitro by nonhydrolyzable acylsulfamate analogs that mimic the AsbC-bound intermediate 3,4-dihydroxybenzoyl-AMP. Functionally, involved in the biosynthesis of petrobactin, a catecholate siderophore that functions in both iron acquisition and virulence. Catalyzes the adenylation of 3,4-dihydroxybenzoate (3,4-DHBA) to the corresponding AMP ester, followed by the transfer of the activated unit to the phosphopantetheine thiol of the aryl-carrier protein AsbD. The protein is 3,4-dihydroxybenzoate--[aryl-carrier protein] ligase of Bacillus anthracis.